A 132-amino-acid polypeptide reads, in one-letter code: Small ribosomal subunit protein uS8c (132 aa).

Belongs to the universal ribosomal protein uS8 family. As to quaternary structure, part of the 30S ribosomal subunit.

It is found in the plastid. The protein resides in the chloroplast. Functionally, one of the primary rRNA binding proteins, it binds directly to 16S rRNA central domain where it helps coordinate assembly of the platform of the 30S subunit. The chain is Small ribosomal subunit protein uS8c (rps8) from Anthoceros angustus (Hornwort).